We begin with the raw amino-acid sequence, 79 residues long: UPF0154 protein SAK_1616 (79 aa).

Residues 5–25 (IWILLIIVALFGGLVGGIFIA) form a helical membrane-spanning segment.

It belongs to the UPF0154 family.

The protein localises to the cell membrane. In Streptococcus agalactiae serotype Ia (strain ATCC 27591 / A909 / CDC SS700), this protein is UPF0154 protein SAK_1616.